A 184-amino-acid polypeptide reads, in one-letter code: Oligoribonuclease (184 aa).

An Exonuclease domain is found at 7-170; sequence LIWIDLEMTG…DDIRESVAEL (164 aa). The active site involves tyrosine 128.

The protein belongs to the oligoribonuclease family.

The protein resides in the cytoplasm. Functionally, 3'-to-5' exoribonuclease specific for small oligoribonucleotides. This is Oligoribonuclease from Baumannia cicadellinicola subsp. Homalodisca coagulata.